We begin with the raw amino-acid sequence, 231 residues long: Female protein (231 aa).

The signal sequence occupies residues 1–19 (MDKMLLLLGVSILLSEVFA). Residues 24–223 (TGKVFVFPRE…YAVIRPRCVA (200 aa)) enclose the Pentraxin (PTX) domain. N-linked (GlcNAc...) asparagine glycosylation occurs at Asn-51. Cysteines 55 and 114 form a disulfide. Residues Asp-77, Asn-78, Glu-155, Gln-156, Asp-157, and Gln-167 each contribute to the Ca(2+) site.

Belongs to the pentraxin family. Homopentamer. Pentraxin (or pentaxin) have a discoid arrangement of 5 non-covalently bound subunits. It depends on Ca(2+) as a cofactor.

It is found in the secreted. This chain is Female protein, found in Nothocricetulus migratorius (Gray dwarf hamster).